We begin with the raw amino-acid sequence, 41 residues long: LDGRNAAADFETSDLLAMTIRGGCCSYPPCIANNPLCGGKR.

A propeptide spanning residues 1-21 is cleaved from the precursor; sequence LDGRNAAADFETSDLLAMTIR. Intrachain disulfides connect Cys24–Cys30 and Cys25–Cys37. Cys37 is subject to Cysteine amide. Residues 38 to 41 constitute a propeptide that is removed on maturation; the sequence is GGKR.

This sequence belongs to the conotoxin A superfamily. Non-native isomers 'ribbon' (with disulfide connectivity C1-C4, C2-C3) and 'beads' (with disulfide connectivity C1-C2, C3-C4) also inhibit high voltage-activated (HVA) calcium channel currents in rat DRG neurons (25-30% inhibition at 1 uM toxin). In terms of processing, mutants Pu1.2(9-16), [C3S; C9S]Pu1.2 and [C4S]Pu1.2(1-9) are all C-terminally amidated. Expressed by the venom duct.

The protein localises to the secreted. Functionally, alpha-conotoxins act on postsynaptic membranes, they bind to the nicotinic acetylcholine receptors (nAChR) and thus inhibit them. This toxin also inhibits high voltage-activated (HVA) calcium channel currents in rat DRG neurons (27% inhibition at 1 uM toxin) probably by activating GABA(B) receptors (GABBR1 and/or GABBR2). The protein is Alpha-conotoxin-like Pu1.2 of Conus pulicarius (Flea-bitten cone).